Here is a 75-residue protein sequence, read N- to C-terminus: Putative membrane protein insertion efficiency factor (75 aa).

This sequence belongs to the UPF0161 family.

The protein localises to the cell membrane. Its function is as follows. Could be involved in insertion of integral membrane proteins into the membrane. The sequence is that of Putative membrane protein insertion efficiency factor from Bacillus cytotoxicus (strain DSM 22905 / CIP 110041 / 391-98 / NVH 391-98).